The sequence spans 477 residues: Salivary plasminogen activator alpha 1 (477 aa).

Positions M1–R36 are cleaved as a signal peptide. A Fibronectin type-I domain is found at V40 to V82. 14 disulfide bridges follow: C42-C72, C70-C79, C87-C98, C92-C109, C111-C120, C128-C209, C149-C191, C180-C204, C214-C345, C257-C273, C265-C334, C359-C434, C391-C407, and C424-C452. The EGF-like domain occupies P83–E121. A Kringle domain is found at C128 to C209. N-linked (GlcNAc...) asparagine glycosylation is present at N153. In terms of domain architecture, Peptidase S1 spans S226–H476. Active-site charge relay system residues include H272 and D321. N-linked (GlcNAc...) asparagine glycosylation is present at N398. The Charge relay system role is filled by S428.

This sequence belongs to the peptidase S1 family. In terms of assembly, monomer.

Its subcellular location is the secreted. The catalysed reaction is Specific cleavage of Arg-|-Val bond in plasminogen to form plasmin.. Activity toward plasminogen is stimulated in the presence of fibrin I. In terms of biological role, probably essential to support the feeding habits of this exclusively haematophagous animal. Potent thrombolytic agent. In Desmodus rotundus (Vampire bat), this protein is Salivary plasminogen activator alpha 1.